Here is a 270-residue protein sequence, read N- to C-terminus: Tryptophan synthase alpha chain (270 aa).

Catalysis depends on proton acceptor residues glutamate 49 and aspartate 60.

The protein belongs to the TrpA family. Tetramer of two alpha and two beta chains.

It carries out the reaction (1S,2R)-1-C-(indol-3-yl)glycerol 3-phosphate + L-serine = D-glyceraldehyde 3-phosphate + L-tryptophan + H2O. It functions in the pathway amino-acid biosynthesis; L-tryptophan biosynthesis; L-tryptophan from chorismate: step 5/5. Its function is as follows. The alpha subunit is responsible for the aldol cleavage of indoleglycerol phosphate to indole and glyceraldehyde 3-phosphate. This is Tryptophan synthase alpha chain from Pseudomonas fluorescens (strain ATCC BAA-477 / NRRL B-23932 / Pf-5).